Here is a 168-residue protein sequence, read N- to C-terminus: Protein GRE1 (168 aa).

The tract at residues 1–168 (MSNLLNKFAD…DDDSGNQGVW (168 aa)) is disordered. 2 stretches are compositionally biased toward basic and acidic residues: residues 8 to 20 (FADKLHGNDHDER) and 27 to 43 (DQTRQQRHEKHQQREFR). Polar residues-rich tracts occupy residues 56–81 (NQGNFPQRQQPQSNLGGNTQFGGNDF) and 120–144 (TSGQQQKQGRTRGAQSNRYQSSNIG).

The protein localises to the cytoplasm. The polypeptide is Protein GRE1 (GRE1) (Saccharomyces cerevisiae (strain ATCC 204508 / S288c) (Baker's yeast)).